We begin with the raw amino-acid sequence, 61 residues long: TERGFLDCTSPPVTGPCRAGFKRYNYNTRTKQCEPFKYGGCKGNGNRYKSEQDCLDACSGF.

One can recognise a BPTI/Kunitz inhibitor domain in the interval 8 to 58 (CTSPPVTGPCRAGFKRYNYNTRTKQCEPFKYGGCKGNGNRYKSEQDCLDAC). Cystine bridges form between C8/C58, C17/C41, and C33/C54.

Its subcellular location is the secreted. Functionally, inhibitor of trypsin and chymotrypsin. The polypeptide is Proteinase inhibitor (Tachypleus tridentatus (Japanese horseshoe crab)).